The following is a 129-amino-acid chain: Flagellar assembly factor FliW (129 aa).

Belongs to the FliW family. As to quaternary structure, interacts with translational regulator CsrA and flagellin(s).

The protein resides in the cytoplasm. Its function is as follows. Acts as an anti-CsrA protein, binds CsrA and prevents it from repressing translation of its target genes, one of which is flagellin. Binds to flagellin and participates in the assembly of the flagellum. The protein is Flagellar assembly factor FliW of Campylobacter jejuni subsp. doylei (strain ATCC BAA-1458 / RM4099 / 269.97).